The sequence spans 161 residues: Shikimate kinase (161 aa).

Residue 10 to 15 participates in ATP binding; sequence GAGKTT. Thr-14 provides a ligand contact to Mg(2+). Substrate contacts are provided by Asp-28, Arg-52, and Gly-74. Arg-114 contributes to the ATP binding site. Arg-132 provides a ligand contact to substrate.

The protein belongs to the shikimate kinase family. Monomer. Requires Mg(2+) as cofactor.

It localises to the cytoplasm. The enzyme catalyses shikimate + ATP = 3-phosphoshikimate + ADP + H(+). The protein operates within metabolic intermediate biosynthesis; chorismate biosynthesis; chorismate from D-erythrose 4-phosphate and phosphoenolpyruvate: step 5/7. Catalyzes the specific phosphorylation of the 3-hydroxyl group of shikimic acid using ATP as a cosubstrate. The chain is Shikimate kinase from Streptococcus gordonii (strain Challis / ATCC 35105 / BCRC 15272 / CH1 / DL1 / V288).